Reading from the N-terminus, the 530-residue chain is Histone-arginine methyltransferase CARMER (530 aa).

The SAM-dependent MTase PRMT-type domain occupies 141 to 450 (ASQYFQFYGY…QSYDVTIDLH (310 aa)). Positions 154, 163, 187, 209, 238, and 266 each coordinate S-adenosyl-L-methionine. R501 is subject to Asymmetric dimethylarginine; by autocatalysis.

It belongs to the class I-like SAM-binding methyltransferase superfamily. Protein arginine N-methyltransferase family. In terms of assembly, homodimer. Post-translationally, the dimethylated protein is the major form.

The protein localises to the cytoplasm. It is found in the nucleus. The enzyme catalyses L-arginyl-[protein] + 2 S-adenosyl-L-methionine = N(omega),N(omega)-dimethyl-L-arginyl-[protein] + 2 S-adenosyl-L-homocysteine + 2 H(+). In terms of biological role, methylates (mono- and asymmetric dimethylation) the guanidino nitrogens of arginyl residues in proteins. May methylate histone H3 at 'Arg-17' and activate transcription via chromatin remodeling. The polypeptide is Histone-arginine methyltransferase CARMER (Art4) (Drosophila yakuba (Fruit fly)).